Consider the following 590-residue polypeptide: Glutamine--fructose-6-phosphate aminotransferase [isomerizing] (590 aa).

The Nucleophile; for GATase activity role is filled by Cys2. The Glutamine amidotransferase type-2 domain maps to 2-221; that stretch reads CGIIGIVSSK…DGELGFITTS (220 aa). SIS domains lie at 286 to 422 and 445 to 580; these read IIAE…DNTN and IGEE…PDKP. The active-site For Fru-6P isomerization activity is the Lys585.

Homodimer.

It localises to the cytoplasm. It carries out the reaction D-fructose 6-phosphate + L-glutamine = D-glucosamine 6-phosphate + L-glutamate. Its function is as follows. Catalyzes the first step in hexosamine metabolism, converting fructose-6P into glucosamine-6P using glutamine as a nitrogen source. This is Glutamine--fructose-6-phosphate aminotransferase [isomerizing] from Sulfolobus acidocaldarius (strain ATCC 33909 / DSM 639 / JCM 8929 / NBRC 15157 / NCIMB 11770).